The primary structure comprises 496 residues: Aspartyl/glutamyl-tRNA(Asn/Gln) amidotransferase subunit B (496 aa).

This sequence belongs to the GatB/GatE family. GatB subfamily. Heterotrimer of A, B and C subunits.

The enzyme catalyses L-glutamyl-tRNA(Gln) + L-glutamine + ATP + H2O = L-glutaminyl-tRNA(Gln) + L-glutamate + ADP + phosphate + H(+). It catalyses the reaction L-aspartyl-tRNA(Asn) + L-glutamine + ATP + H2O = L-asparaginyl-tRNA(Asn) + L-glutamate + ADP + phosphate + 2 H(+). Allows the formation of correctly charged Asn-tRNA(Asn) or Gln-tRNA(Gln) through the transamidation of misacylated Asp-tRNA(Asn) or Glu-tRNA(Gln) in organisms which lack either or both of asparaginyl-tRNA or glutaminyl-tRNA synthetases. The reaction takes place in the presence of glutamine and ATP through an activated phospho-Asp-tRNA(Asn) or phospho-Glu-tRNA(Gln). This is Aspartyl/glutamyl-tRNA(Asn/Gln) amidotransferase subunit B from Nitrosospira multiformis (strain ATCC 25196 / NCIMB 11849 / C 71).